The chain runs to 175 residues: Alkyl hydroperoxide reductase AhpD (175 aa).

The active-site Proton donor is Cys131. An intrachain disulfide couples Cys131 to Cys134. The active-site Cysteine sulfenic acid (-SOH) intermediate is Cys134.

Belongs to the AhpD family.

The enzyme catalyses N(6)-[(R)-dihydrolipoyl]-L-lysyl-[lipoyl-carrier protein] + a hydroperoxide = N(6)-[(R)-lipoyl]-L-lysyl-[lipoyl-carrier protein] + an alcohol + H2O. Antioxidant protein with alkyl hydroperoxidase activity. Required for the reduction of the AhpC active site cysteine residues and for the regeneration of the AhpC enzyme activity. This is Alkyl hydroperoxide reductase AhpD from Brucella anthropi (strain ATCC 49188 / DSM 6882 / CCUG 24695 / JCM 21032 / LMG 3331 / NBRC 15819 / NCTC 12168 / Alc 37) (Ochrobactrum anthropi).